A 767-amino-acid chain; its full sequence is 5-methyltetrahydropteroyltriglutamate--homocysteine methyltransferase (767 aa).

Lys-19 contacts 5-methyltetrahydropteroyltri-L-glutamate. The residue at position 89 (Ser-89) is a Phosphoserine. Asn-126 contacts 5-methyltetrahydropteroyltri-L-glutamate. A Phosphoserine modification is found at Ser-242. L-homocysteine-binding positions include 444 to 446 (IGS) and Glu-497. Residues 444-446 (IGS) and Glu-497 each bind L-methionine. 5-methyltetrahydropteroyltri-L-glutamate contacts are provided by residues Asp-502, Tyr-525, and 528-529 (RY). Phosphothreonine is present on Thr-566. 5-methyltetrahydropteroyltri-L-glutamate is bound at residue Trp-574. An L-homocysteine-binding site is contributed by Asp-612. Asp-612 provides a ligand contact to L-methionine. Phosphoserine is present on Ser-629. Residues His-655, Cys-657, and Glu-677 each contribute to the Zn(2+) site. His-705 (proton donor) is an active-site residue. Ser-706 carries the phosphoserine modification. Residue Cys-737 participates in Zn(2+) binding.

This sequence belongs to the vitamin-B12 independent methionine synthase family. Requires Zn(2+) as cofactor.

The catalysed reaction is 5-methyltetrahydropteroyltri-L-glutamate + L-homocysteine = tetrahydropteroyltri-L-glutamate + L-methionine. It participates in amino-acid biosynthesis; L-methionine biosynthesis via de novo pathway; L-methionine from L-homocysteine (MetE route): step 1/1. Functionally, catalyzes the transfer of a methyl group from 5-methyltetrahydrofolate to homocysteine resulting in methionine formation. This Saccharomyces cerevisiae (strain ATCC 204508 / S288c) (Baker's yeast) protein is 5-methyltetrahydropteroyltriglutamate--homocysteine methyltransferase (MET6).